Reading from the N-terminus, the 288-residue chain is 33 kDa chaperonin (288 aa).

2 disulfide bridges follow: Cys-236-Cys-238 and Cys-269-Cys-272.

This sequence belongs to the HSP33 family. In terms of processing, under oxidizing conditions two disulfide bonds are formed involving the reactive cysteines. Under reducing conditions zinc is bound to the reactive cysteines and the protein is inactive.

It localises to the cytoplasm. Functionally, redox regulated molecular chaperone. Protects both thermally unfolding and oxidatively damaged proteins from irreversible aggregation. Plays an important role in the bacterial defense system toward oxidative stress. In Lactococcus lactis subsp. lactis (strain IL1403) (Streptococcus lactis), this protein is 33 kDa chaperonin.